A 242-amino-acid chain; its full sequence is DNA repair protein RecO (242 aa).

It belongs to the RecO family.

Involved in DNA repair and RecF pathway recombination. The polypeptide is DNA repair protein RecO (Wolbachia pipientis subsp. Culex pipiens (strain wPip)).